We begin with the raw amino-acid sequence, 223 residues long: Probable transaldolase (223 aa).

Lysine 91 (schiff-base intermediate with substrate) is an active-site residue.

Belongs to the transaldolase family. Type 3B subfamily.

The protein localises to the cytoplasm. The enzyme catalyses D-sedoheptulose 7-phosphate + D-glyceraldehyde 3-phosphate = D-erythrose 4-phosphate + beta-D-fructose 6-phosphate. The protein operates within carbohydrate degradation; pentose phosphate pathway; D-glyceraldehyde 3-phosphate and beta-D-fructose 6-phosphate from D-ribose 5-phosphate and D-xylulose 5-phosphate (non-oxidative stage): step 2/3. Functionally, transaldolase is important for the balance of metabolites in the pentose-phosphate pathway. In Chlorobium phaeobacteroides (strain BS1), this protein is Probable transaldolase.